A 163-amino-acid polypeptide reads, in one-letter code: uncharacterized protein (163 aa).

The segment at 144–163 (WSHSQSQLGTPGRGKGALGF) is disordered. Residues 154–163 (PGRGKGALGF) are compositionally biased toward gly residues.

This is an uncharacterized protein from Homo sapiens (Human).